Reading from the N-terminus, the 314-residue chain is Ribonuclease Z (314 aa).

His63, His65, Asp67, His68, His142, Asp205, and His263 together coordinate Zn(2+). The active-site Proton acceptor is Asp67.

Belongs to the RNase Z family. As to quaternary structure, homodimer. Zn(2+) is required as a cofactor.

It catalyses the reaction Endonucleolytic cleavage of RNA, removing extra 3' nucleotides from tRNA precursor, generating 3' termini of tRNAs. A 3'-hydroxy group is left at the tRNA terminus and a 5'-phosphoryl group is left at the trailer molecule.. Zinc phosphodiesterase, which displays some tRNA 3'-processing endonuclease activity. Probably involved in tRNA maturation, by removing a 3'-trailer from precursor tRNA. The sequence is that of Ribonuclease Z from Kineococcus radiotolerans (strain ATCC BAA-149 / DSM 14245 / SRS30216).